Here is a 126-residue protein sequence, read N- to C-terminus: Aspartate 1-decarboxylase (126 aa).

Serine 25 functions as the Schiff-base intermediate with substrate; via pyruvic acid in the catalytic mechanism. Pyruvic acid (Ser) is present on serine 25. Threonine 57 is a substrate binding site. Catalysis depends on tyrosine 58, which acts as the Proton donor. 73–75 (GAA) serves as a coordination point for substrate.

The protein belongs to the PanD family. In terms of assembly, heterooctamer of four alpha and four beta subunits. The cofactor is pyruvate. In terms of processing, is synthesized initially as an inactive proenzyme, which is activated by self-cleavage at a specific serine bond to produce a beta-subunit with a hydroxyl group at its C-terminus and an alpha-subunit with a pyruvoyl group at its N-terminus.

It is found in the cytoplasm. The enzyme catalyses L-aspartate + H(+) = beta-alanine + CO2. The protein operates within cofactor biosynthesis; (R)-pantothenate biosynthesis; beta-alanine from L-aspartate: step 1/1. In terms of biological role, catalyzes the pyruvoyl-dependent decarboxylation of aspartate to produce beta-alanine. The polypeptide is Aspartate 1-decarboxylase (Photorhabdus laumondii subsp. laumondii (strain DSM 15139 / CIP 105565 / TT01) (Photorhabdus luminescens subsp. laumondii)).